We begin with the raw amino-acid sequence, 599 residues long: Sulfite reductase [NADPH] flavoprotein alpha-component (599 aa).

Positions 64-202 (ITLISASQTG…AAAEWRARVV (139 aa)) constitute a Flavodoxin-like domain. FMN-binding positions include 70–75 (SQTGNA), 117–120 (STQG), and 153–162 (LGDTSYEFFC). In terms of domain architecture, FAD-binding FR-type spans 234–448 (EAPLTATLSV…IEHNDNFRLP (215 aa)). FAD contacts are provided by residues Thr-322, Ala-356, 386 to 389 (RLYS), 404 to 406 (TVG), Tyr-410, and 419 to 422 (GGAS). Residues 519–520 (SR), 525–529 (KIYVQ), and Asp-561 each bind NADP(+). Tyr-599 is an FAD binding site.

Belongs to the NADPH-dependent sulphite reductase flavoprotein subunit CysJ family. The protein in the N-terminal section; belongs to the flavodoxin family. It in the C-terminal section; belongs to the flavoprotein pyridine nucleotide cytochrome reductase family. In terms of assembly, alpha(8)-beta(8). The alpha component is a flavoprotein, the beta component is a hemoprotein. FAD is required as a cofactor. The cofactor is FMN.

It carries out the reaction hydrogen sulfide + 3 NADP(+) + 3 H2O = sulfite + 3 NADPH + 4 H(+). Its pathway is sulfur metabolism; hydrogen sulfide biosynthesis; hydrogen sulfide from sulfite (NADPH route): step 1/1. In terms of biological role, component of the sulfite reductase complex that catalyzes the 6-electron reduction of sulfite to sulfide. This is one of several activities required for the biosynthesis of L-cysteine from sulfate. The flavoprotein component catalyzes the electron flow from NADPH -&gt; FAD -&gt; FMN to the hemoprotein component. The chain is Sulfite reductase [NADPH] flavoprotein alpha-component from Klebsiella pneumoniae subsp. pneumoniae (strain ATCC 700721 / MGH 78578).